A 428-amino-acid chain; its full sequence is Adenylosuccinate synthetase (428 aa).

GTP-binding positions include 12-18 and 40-42; these read GDEGKGK and GHT. Aspartate 13 acts as the Proton acceptor in catalysis. Mg(2+) is bound by residues aspartate 13 and glycine 40. Residues 13–16, 38–41, threonine 133, arginine 147, asparagine 224, threonine 239, and arginine 303 each bind IMP; these read DEGK and NAGH. Histidine 41 (proton donor) is an active-site residue. 299-305 contacts substrate; sequence TTTGRRR. GTP is bound by residues arginine 305, 331 to 333, and 413 to 415; these read KLD and GVG.

The protein belongs to the adenylosuccinate synthetase family. As to quaternary structure, homodimer. Requires Mg(2+) as cofactor.

It localises to the cytoplasm. The enzyme catalyses IMP + L-aspartate + GTP = N(6)-(1,2-dicarboxyethyl)-AMP + GDP + phosphate + 2 H(+). It functions in the pathway purine metabolism; AMP biosynthesis via de novo pathway; AMP from IMP: step 1/2. Functionally, plays an important role in the de novo pathway and in the salvage pathway of purine nucleotide biosynthesis. Catalyzes the first committed step in the biosynthesis of AMP from IMP. In Coprinopsis cinerea (strain Okayama-7 / 130 / ATCC MYA-4618 / FGSC 9003) (Inky cap fungus), this protein is Adenylosuccinate synthetase.